The primary structure comprises 90 residues: UPF0367 protein Npun_R4552 (90 aa).

It belongs to the UPF0367 family.

This Nostoc punctiforme (strain ATCC 29133 / PCC 73102) protein is UPF0367 protein Npun_R4552.